We begin with the raw amino-acid sequence, 138 residues long: NADPH-dependent 7-cyano-7-deazaguanine reductase (138 aa).

The active-site Thioimide intermediate is cysteine 53. Aspartate 60 acts as the Proton donor in catalysis. Substrate-binding positions include 75–77 and 94–95; these read VEL and HE.

The protein belongs to the GTP cyclohydrolase I family. QueF type 1 subfamily.

Its subcellular location is the cytoplasm. It carries out the reaction 7-aminomethyl-7-carbaguanine + 2 NADP(+) = 7-cyano-7-deazaguanine + 2 NADPH + 3 H(+). It participates in tRNA modification; tRNA-queuosine biosynthesis. In terms of biological role, catalyzes the NADPH-dependent reduction of 7-cyano-7-deazaguanine (preQ0) to 7-aminomethyl-7-deazaguanine (preQ1). The protein is NADPH-dependent 7-cyano-7-deazaguanine reductase of Gloeothece citriformis (strain PCC 7424) (Cyanothece sp. (strain PCC 7424)).